The chain runs to 421 residues: UPF0229 protein lpl2726 (421 aa).

The interval isoleucine 83 to glutamate 110 is disordered. Over residues proline 91–glycine 101 the composition is skewed to gly residues.

The protein belongs to the UPF0229 family.

In Legionella pneumophila (strain Lens), this protein is UPF0229 protein lpl2726.